The sequence spans 424 residues: Serine--tRNA ligase (424 aa).

An L-serine-binding site is contributed by 230 to 232 (TAE). 261-263 (RSE) contacts ATP. Glu-284 contributes to the L-serine binding site. 348–351 (EISS) lines the ATP pocket. Ser-384 is a binding site for L-serine.

Belongs to the class-II aminoacyl-tRNA synthetase family. Type-1 seryl-tRNA synthetase subfamily. In terms of assembly, homodimer. The tRNA molecule binds across the dimer.

The protein resides in the cytoplasm. It catalyses the reaction tRNA(Ser) + L-serine + ATP = L-seryl-tRNA(Ser) + AMP + diphosphate + H(+). The catalysed reaction is tRNA(Sec) + L-serine + ATP = L-seryl-tRNA(Sec) + AMP + diphosphate + H(+). Its pathway is aminoacyl-tRNA biosynthesis; selenocysteinyl-tRNA(Sec) biosynthesis; L-seryl-tRNA(Sec) from L-serine and tRNA(Sec): step 1/1. In terms of biological role, catalyzes the attachment of serine to tRNA(Ser). Is also able to aminoacylate tRNA(Sec) with serine, to form the misacylated tRNA L-seryl-tRNA(Sec), which will be further converted into selenocysteinyl-tRNA(Sec). The protein is Serine--tRNA ligase of Streptococcus pneumoniae (strain Hungary19A-6).